Reading from the N-terminus, the 526-residue chain is GMP synthase [glutamine-hydrolyzing] (526 aa).

Residues 9–208 (RILILDFGSQ…VMDICGCETL (200 aa)) enclose the Glutamine amidotransferase type-1 domain. Cysteine 86 functions as the Nucleophile in the catalytic mechanism. Active-site residues include histidine 182 and glutamate 184. The region spanning 209 to 401 (WTSSSIIEDA…LGLPYEMLYR (193 aa)) is the GMPS ATP-PPase domain. An ATP-binding site is contributed by 236–242 (SGGVDSS).

As to quaternary structure, homodimer.

It catalyses the reaction XMP + L-glutamine + ATP + H2O = GMP + L-glutamate + AMP + diphosphate + 2 H(+). The protein operates within purine metabolism; GMP biosynthesis; GMP from XMP (L-Gln route): step 1/1. Catalyzes the synthesis of GMP from XMP. The sequence is that of GMP synthase [glutamine-hydrolyzing] from Psychromonas ingrahamii (strain DSM 17664 / CCUG 51855 / 37).